The primary structure comprises 369 residues: Phosphoribosyl pyrophosphate synthase-associated protein 2 (369 aa).

The residue at position 1 (Met1) is an N-acetylmethionine. A phosphoserine mark is found at Ser219, Ser227, and Ser233.

This sequence belongs to the ribose-phosphate pyrophosphokinase family. Binds to PRPS1 and PRPS2. In terms of tissue distribution, ubiquitous.

In terms of biological role, seems to play a negative regulatory role in 5-phosphoribose 1-diphosphate synthesis. This chain is Phosphoribosyl pyrophosphate synthase-associated protein 2 (Prpsap2), found in Rattus norvegicus (Rat).